The following is a 629-amino-acid chain: tRNA uridine 5-carboxymethylaminomethyl modification enzyme MnmG (629 aa).

13-18 (GGGHAG) contributes to the FAD binding site. An NAD(+)-binding site is contributed by 273–287 (GPRYCPSIEDKIHRF).

The protein belongs to the MnmG family. As to quaternary structure, homodimer. Heterotetramer of two MnmE and two MnmG subunits. FAD serves as cofactor.

Its subcellular location is the cytoplasm. Functionally, NAD-binding protein involved in the addition of a carboxymethylaminomethyl (cmnm) group at the wobble position (U34) of certain tRNAs, forming tRNA-cmnm(5)s(2)U34. This Shewanella baltica (strain OS155 / ATCC BAA-1091) protein is tRNA uridine 5-carboxymethylaminomethyl modification enzyme MnmG.